Here is a 346-residue protein sequence, read N- to C-terminus: Small ribosomal subunit biogenesis GTPase RsgA 1 (346 aa).

The 156-residue stretch at 93–248 (EEQLIAANFD…IIDTPGMREF (156 aa)) folds into the CP-type G domain. Residues 138–141 (TKAD) and 190–198 (GSSGVGKSS) contribute to the GTP site. The Zn(2+) site is built by Cys271, Cys276, His278, and Cys284.

It belongs to the TRAFAC class YlqF/YawG GTPase family. RsgA subfamily. Monomer. Associates with 30S ribosomal subunit, binds 16S rRNA. Zn(2+) is required as a cofactor.

The protein resides in the cytoplasm. One of several proteins that assist in the late maturation steps of the functional core of the 30S ribosomal subunit. Helps release RbfA from mature subunits. May play a role in the assembly of ribosomal proteins into the subunit. Circularly permuted GTPase that catalyzes slow GTP hydrolysis, GTPase activity is stimulated by the 30S ribosomal subunit. In Listeria innocua serovar 6a (strain ATCC BAA-680 / CLIP 11262), this protein is Small ribosomal subunit biogenesis GTPase RsgA 1.